Here is a 151-residue protein sequence, read N- to C-terminus: Cytochrome c-type biogenesis protein CcmE (151 aa).

Topologically, residues 1-8 are cytoplasmic; it reads MNPQRKKR. A helical; Signal-anchor for type II membrane protein membrane pass occupies residues 9 to 29; the sequence is LLLIVGLLVGVGVAVGFALSA. The Periplasmic segment spans residues 30–151; sequence LQQNINLFYT…QAAAGGETKP (122 aa). Residues His124 and Tyr128 each coordinate heme.

It belongs to the CcmE/CycJ family.

It is found in the cell inner membrane. Functionally, heme chaperone required for the biogenesis of c-type cytochromes. Transiently binds heme delivered by CcmC and transfers the heme to apo-cytochromes in a process facilitated by CcmF and CcmH. In Pseudomonas putida (strain ATCC 700007 / DSM 6899 / JCM 31910 / BCRC 17059 / LMG 24140 / F1), this protein is Cytochrome c-type biogenesis protein CcmE.